The primary structure comprises 165 residues: Cytochrome c-type biogenesis protein CcmE (165 aa).

The Cytoplasmic portion of the chain corresponds to 1–7 (MTRKQKR). The helical; Signal-anchor for type II membrane protein transmembrane segment at 8–28 (LAIIGGGMSFIVAAVLLVMFA) threads the bilayer. Residues 29–165 (FGQSIAYFYM…ASGDKTGATK (137 aa)) lie on the Periplasmic side of the membrane. The heme site is built by His-123 and Tyr-127. The tract at residues 138-165 (DKGLWQQGAEGAAPAASAASGDKTGATK) is disordered. The span at 145-158 (GAEGAAPAASAASG) shows a compositional bias: low complexity.

The protein belongs to the CcmE/CycJ family.

The protein resides in the cell inner membrane. Its function is as follows. Heme chaperone required for the biogenesis of c-type cytochromes. Transiently binds heme delivered by CcmC and transfers the heme to apo-cytochromes in a process facilitated by CcmF and CcmH. This Agrobacterium fabrum (strain C58 / ATCC 33970) (Agrobacterium tumefaciens (strain C58)) protein is Cytochrome c-type biogenesis protein CcmE.